The following is a 418-amino-acid chain: L-rhamnose isomerase (418 aa).

Mn(2+) contacts are provided by His-262, Asp-294, and Asp-296.

The protein belongs to the rhamnose isomerase family. As to quaternary structure, homotetramer. The cofactor is Mn(2+).

Its subcellular location is the cytoplasm. The catalysed reaction is L-rhamnopyranose = L-rhamnulose. It functions in the pathway carbohydrate degradation; L-rhamnose degradation; glycerone phosphate from L-rhamnose: step 1/3. In terms of biological role, catalyzes the interconversion of L-rhamnose and L-rhamnulose. The protein is L-rhamnose isomerase of Cronobacter sakazakii (strain ATCC BAA-894) (Enterobacter sakazakii).